A 348-amino-acid chain; its full sequence is GTPase Obg 1 (348 aa).

The Obg domain occupies 1-159 (MSFVDEAKIH…HCVLLKLKIV (159 aa)). The OBG-type G domain occupies 160 to 329 (SDVGIIGMPN…LHAQVKKAVV (170 aa)). GTP is bound by residues 166 to 173 (GMPNAGKS), 191 to 195 (FTTLE), 212 to 215 (DIPG), 279 to 282 (NKCD), and 310 to 312 (GDE). The Mg(2+) site is built by Ser173 and Thr193.

Belongs to the TRAFAC class OBG-HflX-like GTPase superfamily. OBG GTPase family. In terms of assembly, monomer. It depends on Mg(2+) as a cofactor.

It is found in the cytoplasm. Functionally, an essential GTPase which binds GTP, GDP and possibly (p)ppGpp with moderate affinity, with high nucleotide exchange rates and a fairly low GTP hydrolysis rate. Plays a role in control of the cell cycle, stress response, ribosome biogenesis and in those bacteria that undergo differentiation, in morphogenesis control. The chain is GTPase Obg 1 from Anaplasma marginale (strain Florida).